A 640-amino-acid chain; its full sequence is Serine/threonine-protein kinase ELM1 (640 aa).

A disordered region spans residues 27–47; sequence ELDSPPITPTSQTSSFGSSFS. Positions 35–47 are enriched in low complexity; sequence PTSQTSSFGSSFS. Residues 88–420 enclose the Protein kinase domain; it reads YTLGVSAGSG…PIDSRNHSQI (333 aa). ATP contacts are provided by residues 94–102 and Lys-117; that span reads AGSGQFGYV. At Ser-152 the chain carries Phosphoserine. The active-site Proton acceptor is the Asp-259. Phosphoserine is present on residues Ser-516 and Ser-519. The segment covering 520–529 has biased composition (polar residues); it reads LPNLTVNNDK. Disordered stretches follow at residues 520–547 and 562–587; these read LPNL…HSSL and SPKE…MDRT. Over residues 530 to 541 the composition is skewed to basic and acidic residues; it reads QNSDMKTDRSES. Positions 569 to 579 are enriched in polar residues; it reads RTHINCSQDKP.

The protein belongs to the protein kinase superfamily. Ser/Thr protein kinase family. The cofactor is Mg(2+).

The enzyme catalyses L-seryl-[protein] + ATP = O-phospho-L-seryl-[protein] + ADP + H(+). It carries out the reaction L-threonyl-[protein] + ATP = O-phospho-L-threonyl-[protein] + ADP + H(+). Functionally, important role in G1 events required for bud emergence and septin organization. Coordinates cell growth and cell division at G2/M, essential for efficient cytokinesis and for regulation of SWE1. This Saccharomyces cerevisiae (strain ATCC 204508 / S288c) (Baker's yeast) protein is Serine/threonine-protein kinase ELM1 (ELM1).